The chain runs to 187 residues: Transcriptional repressor NrdR (187 aa).

Residues Met-1 to Gly-21 form a disordered region. A zinc finger lies at Cys-3 to Cys-34. Residues Ile-49–Asp-139 enclose the ATP-cone domain. Polar residues-rich tracts occupy residues Ile-152 to Ser-162 and Ser-170 to Arg-187. Residues Ile-152–Arg-187 are disordered.

The protein belongs to the NrdR family. Zn(2+) is required as a cofactor.

In terms of biological role, negatively regulates transcription of bacterial ribonucleotide reductase nrd genes and operons by binding to NrdR-boxes. The polypeptide is Transcriptional repressor NrdR (Crocosphaera subtropica (strain ATCC 51142 / BH68) (Cyanothece sp. (strain ATCC 51142))).